The chain runs to 254 residues: 4-hydroxy-tetrahydrodipicolinate reductase (254 aa).

Residues 8 to 13, Asp-35, 86 to 88, and 110 to 113 each bind NAD(+); these read GCSGKM, CST, and SANM. Residue His-143 is the Proton donor/acceptor of the active site. His-144 serves as a coordination point for (S)-2,3,4,5-tetrahydrodipicolinate. Lys-147 serves as the catalytic Proton donor. Residue 153 to 154 coordinates (S)-2,3,4,5-tetrahydrodipicolinate; it reads GT.

The protein belongs to the DapB family.

Its subcellular location is the cytoplasm. The enzyme catalyses (S)-2,3,4,5-tetrahydrodipicolinate + NAD(+) + H2O = (2S,4S)-4-hydroxy-2,3,4,5-tetrahydrodipicolinate + NADH + H(+). It carries out the reaction (S)-2,3,4,5-tetrahydrodipicolinate + NADP(+) + H2O = (2S,4S)-4-hydroxy-2,3,4,5-tetrahydrodipicolinate + NADPH + H(+). It participates in amino-acid biosynthesis; L-lysine biosynthesis via DAP pathway; (S)-tetrahydrodipicolinate from L-aspartate: step 4/4. Catalyzes the conversion of 4-hydroxy-tetrahydrodipicolinate (HTPA) to tetrahydrodipicolinate. This is 4-hydroxy-tetrahydrodipicolinate reductase from Clostridium perfringens (strain ATCC 13124 / DSM 756 / JCM 1290 / NCIMB 6125 / NCTC 8237 / Type A).